Here is a 774-residue protein sequence, read N- to C-terminus: MLSLIEQIKSGKLWDFPGGIHPFENKHQSNRQPIINASIPNELVLPLKQHIGKAGDLLVKVGDRVLKGQPLTQYTSTFMLPIHAPTSGVISAIEPRTVAHPSGLSELCIVLTPDQQEEWFELQPQPDFQQLTPETLLELIRQAGISGMGGAGFPTAKKLQSGLSRTEILIINAAECEPYITADDVLMRQYAHEIIQGIEIVEHILKPKLTIIGIEDNKPEAVAALQQAAQDKPMVIRVIPTKYPSGGEKQLIKILTNLEVPKGGIPADIGLMVQNVGSLQAIARAIVHGEPLIRRVVTLTGDCFRKPRNVWALLGTPVQALLNEFGYKADKKLPRLIMGGPMMGFTLPHAQVPITKTANCILAPTRNELTSSDNEMACIRCGQCAEACPVSLLPQQLQWHAKAEEFDKCEELDLKDCIECGACAYVCPSEIPLVQYYRQAKAEIRTRSLEAEAAERAKARFEEKKARMERDKAERENRFKQAAEDRRKEMQQQGGSDAIAAAIERVKAQKAQLEPTDNSVKPAIAAAIARAKAKQAEAAQSGASEPDNSEMAKLREERKRQARERKAQKGEVTEASTSDGADDKKSAVAAAIARAKARKAEQQETESAAQPAQATPSSDDADPKKAAVAAAIARAKARKAEQQETESTAQPAQATPSSDDADPKKAAVAAAIARAKARKAEKQETESAAQPTQATPSSDDADPKKAAVAAAIARAKARKAEQQETESAAQPTQATPSSDDADPKKAAVAAAIARAKARKAAQQSSSNLNAEEKD.

4Fe-4S ferredoxin-type domains follow at residues 368 to 398 and 408 to 437; these read ELTS…QQLQ and KCEE…VQYY. Positions 378, 381, 384, 388, 417, 420, 423, and 427 each coordinate [4Fe-4S] cluster. The span at 459-490 shows a compositional bias: basic and acidic residues; that stretch reads ARFEEKKARMERDKAERENRFKQAAEDRRKEM. Disordered stretches follow at residues 459 to 496 and 533 to 774; these read ARFE…QGGS and AKQA…EEKD. Low complexity predominate over residues 533 to 545; the sequence is AKQAEAAQSGASE. The segment covering 550 to 572 has biased composition (basic and acidic residues); sequence EMAKLREERKRQARERKAQKGEV. The segment covering 605–618 has biased composition (low complexity); sequence TESAAQPAQATPSS. Polar residues-rich tracts occupy residues 645 to 658, 686 to 698, 725 to 738, and 762 to 774; these read TEST…TPSS, ESAA…TPSS, TESA…TPSS, and QQSS…EEKD.

The protein belongs to the 4Fe4S bacterial-type ferredoxin family. RnfC subfamily. The complex is composed of six subunits: RnfA, RnfB, RnfC, RnfD, RnfE and RnfG. It depends on [4Fe-4S] cluster as a cofactor.

It is found in the cell inner membrane. In terms of biological role, part of a membrane-bound complex that couples electron transfer with translocation of ions across the membrane. This Vibrio cholerae serotype O1 (strain ATCC 39315 / El Tor Inaba N16961) protein is Ion-translocating oxidoreductase complex subunit C.